The primary structure comprises 953 residues: Serine/threonine-protein kinase ppk30 (953 aa).

In terms of domain architecture, Protein kinase spans 57–326; sequence VIIQRYLSEG…IYQTLKEIME (270 aa). ATP contacts are provided by residues 63–71 and K85; that span reads LSEGGFSHV. D187 (proton acceptor) is an active-site residue. Disordered stretches follow at residues 343–402, 427–451, 538–606, 641–669, 748–791, and 864–953; these read ASTY…PSVS, SPIP…RRAD, RFLP…NRMN, RKEP…NKDV, STSQ…RPIG, and RKSC…ESLE. 3 stretches are compositionally biased toward polar residues: residues 355–369, 378–402, and 433–444; these read RTPS…SRPA, TVQT…PSVS, and KSYSATIQTPRS. A compositionally biased stretch (low complexity) spans 547–557; that stretch reads PSEFSSSVGSK. Positions 558-575 are enriched in polar residues; it reads QNLSMDIPSVQNVSTKQK. Positions 656 to 669 are enriched in basic and acidic residues; sequence LKKDQSSEVANKDV. Residues 748-766 are compositionally biased toward polar residues; it reads STSQVSHTQRLQQSISTSL. 3 stretches are compositionally biased toward basic and acidic residues: residues 767–778, 865–884, and 937–953; these read ERVKSNTKKESN, KSCE…DLER, and PHIE…ESLE. Residues S872 and S875 each carry the phosphoserine modification.

It belongs to the protein kinase superfamily. Ser/Thr protein kinase family.

The protein resides in the cytoplasm. The enzyme catalyses L-seryl-[protein] + ATP = O-phospho-L-seryl-[protein] + ADP + H(+). The catalysed reaction is L-threonyl-[protein] + ATP = O-phospho-L-threonyl-[protein] + ADP + H(+). The protein is Serine/threonine-protein kinase ppk30 (ppk30) of Schizosaccharomyces pombe (strain 972 / ATCC 24843) (Fission yeast).